Here is a 165-residue protein sequence, read N- to C-terminus: Large ribosomal subunit protein uL10 (165 aa).

Belongs to the universal ribosomal protein uL10 family. In terms of assembly, part of the ribosomal stalk of the 50S ribosomal subunit. The N-terminus interacts with L11 and the large rRNA to form the base of the stalk. The C-terminus forms an elongated spine to which L12 dimers bind in a sequential fashion forming a multimeric L10(L12)X complex.

Forms part of the ribosomal stalk, playing a central role in the interaction of the ribosome with GTP-bound translation factors. This is Large ribosomal subunit protein uL10 from Shewanella halifaxensis (strain HAW-EB4).